A 350-amino-acid polypeptide reads, in one-letter code: Deoxyhypusine synthase-like protein (350 aa).

Belongs to the deoxyhypusine synthase family.

This Chlorobaculum tepidum (strain ATCC 49652 / DSM 12025 / NBRC 103806 / TLS) (Chlorobium tepidum) protein is Deoxyhypusine synthase-like protein.